The primary structure comprises 339 residues: Anthranilate phosphoribosyltransferase (339 aa).

Residues Gly81, 84 to 85, Ser89, 91 to 94, 109 to 117, and Ala121 contribute to the 5-phospho-alpha-D-ribose 1-diphosphate site; these read GD, NVST, and KHGNRALSS. Gly81 contributes to the anthranilate binding site. Ser93 contributes to the Mg(2+) binding site. Asn112 contributes to the anthranilate binding site. Arg167 serves as a coordination point for anthranilate. Mg(2+)-binding residues include Asp226 and Glu227.

The protein belongs to the anthranilate phosphoribosyltransferase family. In terms of assembly, homodimer. Mg(2+) serves as cofactor.

It catalyses the reaction N-(5-phospho-beta-D-ribosyl)anthranilate + diphosphate = 5-phospho-alpha-D-ribose 1-diphosphate + anthranilate. It participates in amino-acid biosynthesis; L-tryptophan biosynthesis; L-tryptophan from chorismate: step 2/5. In terms of biological role, catalyzes the transfer of the phosphoribosyl group of 5-phosphorylribose-1-pyrophosphate (PRPP) to anthranilate to yield N-(5'-phosphoribosyl)-anthranilate (PRA). The sequence is that of Anthranilate phosphoribosyltransferase from Rhodopseudomonas palustris (strain BisA53).